Reading from the N-terminus, the 415-residue chain is Serine hydroxymethyltransferase (415 aa).

(6S)-5,6,7,8-tetrahydrofolate is bound by residues Leu-117 and 121 to 123 (GHL). Lys-226 carries the N6-(pyridoxal phosphate)lysine modification. Glu-241 is a (6S)-5,6,7,8-tetrahydrofolate binding site.

The protein belongs to the SHMT family. Homodimer. Pyridoxal 5'-phosphate is required as a cofactor.

The protein localises to the cytoplasm. The enzyme catalyses (6R)-5,10-methylene-5,6,7,8-tetrahydrofolate + glycine + H2O = (6S)-5,6,7,8-tetrahydrofolate + L-serine. It functions in the pathway one-carbon metabolism; tetrahydrofolate interconversion. Its pathway is amino-acid biosynthesis; glycine biosynthesis; glycine from L-serine: step 1/1. Its function is as follows. Catalyzes the reversible interconversion of serine and glycine with tetrahydrofolate (THF) serving as the one-carbon carrier. This reaction serves as the major source of one-carbon groups required for the biosynthesis of purines, thymidylate, methionine, and other important biomolecules. Also exhibits THF-independent aldolase activity toward beta-hydroxyamino acids, producing glycine and aldehydes, via a retro-aldol mechanism. In Bacillus pumilus (strain SAFR-032), this protein is Serine hydroxymethyltransferase.